The sequence spans 103 residues: uncharacterized protein (103 aa).

Positions 1–103 are disordered; the sequence is MAGARRRARC…WRGGSCTSQR (103 aa). Basic residues-rich tracts occupy residues 55 to 65 and 74 to 84; these read RRPGPGRRARS and RPPHSRTRARR.

It belongs to the epstein-barr virus RPMS1 family.

This is an uncharacterized protein from Epstein-Barr virus (strain GD1) (HHV-4).